A 435-amino-acid chain; its full sequence is GTPase Der (435 aa).

2 consecutive EngA-type G domains span residues 3-168 (PTVA…PEDD) and 176-351 (VKLT…QNRR). Residues 9 to 16 (GRPNVGKS), 56 to 60 (DTGGY), 120 to 123 (NKVD), 182 to 189 (GRPNVGKS), 229 to 233 (DTAGL), and 294 to 297 (NKWD) contribute to the GTP site. The 84-residue stretch at 352–435 (MKIDTSRLNN…TPIELKFRRK (84 aa)) folds into the KH-like domain.

The protein belongs to the TRAFAC class TrmE-Era-EngA-EngB-Septin-like GTPase superfamily. EngA (Der) GTPase family. As to quaternary structure, associates with the 50S ribosomal subunit.

Its function is as follows. GTPase that plays an essential role in the late steps of ribosome biogenesis. In Chloroherpeton thalassium (strain ATCC 35110 / GB-78), this protein is GTPase Der.